A 582-amino-acid polypeptide reads, in one-letter code: Leucine-rich repeat protein SHOC-2 (582 aa).

Composition is skewed to basic and acidic residues over residues 1–29 (MSSS…KESK) and 36–57 (KESK…KKES). Residues 1–88 (MSSSLGKEKD…PGTRKKSSNA (88 aa)) are disordered. Positions 63–66 (GVAF) match the RVxF motif; important for interaction with PP1c motif. LRR repeat units lie at residues 101–122 (NSMR…VKEL), 124–145 (QLTE…VGCL), 147–169 (NLMT…DNLK), 170–191 (KLRM…VYRL), 193–215 (SLTT…KNLP), 216–237 (KLSM…IGEL), 239–260 (NLIT…IGNC), 262–283 (QITN…IGNL), 285–307 (SLNR…AKCS), 308–329 (ALEE…LLSS), 332–353 (KLNS…GPSQ), 356–377 (TIYS…IFSR), 380–400 (VLSK…DFGT), 403–424 (SMVE…VSGL), 426–448 (SLEV…GNLR), 449–470 (KLRE…IAYL), 472–494 (DLQK…GHLT), 495–516 (NLTH…IGTL), 518–540 (NLEE…LALC), and 542–563 (KLSI…IVAG).

This sequence belongs to the SHOC2 family. In terms of assembly, component of the SHOC2-MRAS-PP1c (SMP) complex consisting of SHOC2, GTP-bound M-Ras/MRAS and the catalytic subunit of protein phosphatase 1 (either PPP1CA, PPP1CB or PPP1CC). SHOC2 and PP1c preferably bind M-Ras/MRAS, but they also bind K-Ras/KRAS, N-Ras/NRAS and H-Ras/HRAS; these interactions are GTP-dependent and both SHOC2 and PP1c are required to form a stable complex. Interacts with PP1c in the absence of Ras GTPases. Interacts with M-Ras/MRAS and RAF1. Interacts with ERBIN; disrupts the interaction with RAF1 and Ras, preventing the activation of the Ras signaling pathway. Interacts with LZTR1.

The protein localises to the cytoplasm. It is found in the nucleus. In terms of biological role, core component of the SHOC2-MRAS-PP1c (SMP) holophosphatase complex that regulates activation of the MAPK pathway. Acts as a scaffolding protein in the SMP complex. The SMP complex specifically dephosphorylates the inhibitory phosphorylation at 'Ser-259' of RAF1 kinase, 'Ser-365' of BRAF kinase and 'Ser-214' of ARAF kinase, stimulating their kinase activities. The SMP complex enhances the dephosphorylation activity and substrate specificity of PP1c. This chain is Leucine-rich repeat protein SHOC-2 (Shoc2), found in Mus musculus (Mouse).